The sequence spans 234 residues: ATP synthase subunit a 2 (234 aa).

6 helical membrane-spanning segments follow: residues Phe29–Leu49, Leu90–Phe110, Ser116–Val136, Phe147–Leu167, Ile186–Met206, and Gly207–Ala227.

It belongs to the ATPase A chain family. F-type ATPases have 2 components, CF(1) - the catalytic core - and CF(0) - the membrane proton channel. CF(1) has five subunits: alpha(3), beta(3), gamma(1), delta(1), epsilon(1). CF(0) has three main subunits: a(1), b(2) and c(9-12). The alpha and beta chains form an alternating ring which encloses part of the gamma chain. CF(1) is attached to CF(0) by a central stalk formed by the gamma and epsilon chains, while a peripheral stalk is formed by the delta and b chains.

The protein resides in the cell inner membrane. Its function is as follows. Key component of the proton channel; it plays a direct role in the translocation of protons across the membrane. The chain is ATP synthase subunit a 2 from Syntrophotalea carbinolica (strain DSM 2380 / NBRC 103641 / GraBd1) (Pelobacter carbinolicus).